The primary structure comprises 401 residues: cAMP-dependent protein kinase type II-alpha regulatory subunit (401 aa).

At serine 2 the chain carries N-acetylserine. Residues 2–135 (SHIQIPPGLT…RLQEACKDIL (134 aa)) form a dimerization and phosphorylation region. Residues serine 47, serine 74, serine 76, and serine 96 each carry the phosphoserine modification. A disordered region spans residues 61 to 83 (ESSAVPVIEEDGESDSDSEDADL). The span at 68 to 83 (IEEDGESDSDSEDADL) shows a compositional bias: acidic residues. 3',5'-cyclic AMP contacts are provided by residues 136 to 257 (LFKN…ESVP), glutamate 205, arginine 214, 258 to 401 (LFKS…DPGQ), glutamate 335, and arginine 344. Threonine 212 carries the phosphothreonine; by PDPK1 modification. 2 positions are modified to phosphoserine: serine 347 and serine 392.

This sequence belongs to the cAMP-dependent kinase regulatory chain family. The inactive form of the enzyme is composed of two regulatory chains and two catalytic chains. Activation by cAMP produces two active catalytic monomers and a regulatory dimer that binds four cAMP molecules. Interacts with AKAP4. Interacts with CBFA2T3. Interacts with the phosphorylated form of PJA2. Interacts with MYRIP. This interaction may link PKA to components of the exocytosis machinery, thus facilitating exocytosis, including insulin release. Forms a complex composed of PRKAR2A, GSK3B and GSKIP through GSKIP interaction; facilitates PKA-induced phosphorylation and regulates GSK3B activity. Interacts with ADCY8; inhibits adenylate cyclase activity through PKA phosphorylation. Phosphorylated by the activated catalytic chain. Four types of regulatory chains are found: I-alpha, I-beta, II-alpha, and II-beta. Their expression varies among tissues and is in some cases constitutive and in others inducible.

It is found in the cytoplasm. Its subcellular location is the cell membrane. Its function is as follows. Regulatory subunit of the cAMP-dependent protein kinases involved in cAMP signaling in cells. Type II regulatory chains mediate membrane association by binding to anchoring proteins, including the MAP2 kinase. The chain is cAMP-dependent protein kinase type II-alpha regulatory subunit (Prkar2a) from Mus musculus (Mouse).